Consider the following 249-residue polypeptide: Large ribosomal subunit protein uL4 (249 aa).

Belongs to the universal ribosomal protein uL4 family. In terms of assembly, part of the 50S ribosomal subunit.

In terms of biological role, one of the primary rRNA binding proteins, this protein initially binds near the 5'-end of the 23S rRNA. It is important during the early stages of 50S assembly. It makes multiple contacts with different domains of the 23S rRNA in the assembled 50S subunit and ribosome. Forms part of the polypeptide exit tunnel. The chain is Large ribosomal subunit protein uL4 from Methanoculleus marisnigri (strain ATCC 35101 / DSM 1498 / JR1).